We begin with the raw amino-acid sequence, 281 residues long: Pantothenate synthetase (281 aa).

Residue 29-36 participates in ATP binding; sequence MGYLHEGH. The active-site Proton donor is H36. (R)-pantoate is bound at residue Q60. Position 60 (Q60) interacts with beta-alanine. 146 to 149 contributes to the ATP binding site; that stretch reads GQKD. Position 152 (Q152) interacts with (R)-pantoate. ATP is bound by residues V175 and 183–186; that span reads MSSR.

The protein belongs to the pantothenate synthetase family. Homodimer.

Its subcellular location is the cytoplasm. It carries out the reaction (R)-pantoate + beta-alanine + ATP = (R)-pantothenate + AMP + diphosphate + H(+). It functions in the pathway cofactor biosynthesis; (R)-pantothenate biosynthesis; (R)-pantothenate from (R)-pantoate and beta-alanine: step 1/1. Catalyzes the condensation of pantoate with beta-alanine in an ATP-dependent reaction via a pantoyl-adenylate intermediate. The protein is Pantothenate synthetase of Pseudothermotoga lettingae (strain ATCC BAA-301 / DSM 14385 / NBRC 107922 / TMO) (Thermotoga lettingae).